The following is a 690-amino-acid chain: MPRQYSLKMTRNIGIMAHIDAGKTTTTERILFHTGKIHKTGETHDGASQMDWMAQEQERGITITSAATTSVWRDHRVNIIDTPGHVDFTVEVSRSLRVLDGAVTVIDAQAGVEPQTETVWRQATEYKVPRIVYVNKMDKIGADFNNAIKTLHRRLGVKANAIQLPIGTELDFSGIIDLVTMTAVEYSGDALETTKEIPIPAHLEEQAIDMRNELIEAVAEFDDELMVTYLEGEEVSVELLKRAIRKGVLAVEFFPVVAGSSFKNKGVRKVLDAVIDYLPSPLDIPPVLGHTSEGVEVYRHADDEEPFTALAFKVMTDPFVGKLTFFRVYSGKIKSGSYVQNTTKGERERFGRILQMHANTRQEIDEVYAGDIAAAVGLKVTTTGNTLATQNDDIILESMNFPEPVIEVAVEPKTKNDQDKMGQALAKLAEEDPTFKTYTNTETGQTIIAGMGELHLDILVDRMKREFKVEANVTEPQVSYRETLTVPNEIEAKFIRQSGGRGQYGHVVIDFEPNPGKGFEFVDKIVGGVIPREYIPSVQKGLEEALGGGILAGFPVVDIKATLKFGSYHDVDSSEMAYKIAASMALKDAKNKANAVILEPIMDVEVVTPNDYVGNVIGDITSRRGRLESQEGRGNAISIRAFVPLSEMFGYATSLRSNTQGRATFVMQFDHFDKVPKSIQEEIIKKRGSN.

The 275-residue stretch at 8-282 (KMTRNIGIMA…AVIDYLPSPL (275 aa)) folds into the tr-type G domain. GTP contacts are provided by residues 17-24 (AHIDAGKT), 81-85 (DTPGH), and 135-138 (NKMD).

This sequence belongs to the TRAFAC class translation factor GTPase superfamily. Classic translation factor GTPase family. EF-G/EF-2 subfamily.

Its subcellular location is the cytoplasm. Catalyzes the GTP-dependent ribosomal translocation step during translation elongation. During this step, the ribosome changes from the pre-translocational (PRE) to the post-translocational (POST) state as the newly formed A-site-bound peptidyl-tRNA and P-site-bound deacylated tRNA move to the P and E sites, respectively. Catalyzes the coordinated movement of the two tRNA molecules, the mRNA and conformational changes in the ribosome. The sequence is that of Elongation factor G from Acholeplasma laidlawii (strain PG-8A).